The sequence spans 600 residues: ATP-dependent lipid A-core flippase (600 aa).

4 helical membrane passes run 27 to 47, 83 to 103, 174 to 194, and 267 to 287; these read ISLF…QPML, LLII…NYFL, LLFM…LIAV, and PLLQ…VLYL. The ABC transmembrane type-1 domain occupies 31 to 322; the sequence is LISIVGFLIF…LSEVSSTIQK (292 aa). Residues 354 to 590 enclose the ABC transporter domain; it reads LDVRNLSFTY…NGYYARLNAM (237 aa). An ATP-binding site is contributed by 388–395; that stretch reads GRSGSGKS.

It belongs to the ABC transporter superfamily. Lipid exporter (TC 3.A.1.106) family. As to quaternary structure, homodimer.

The protein localises to the cell inner membrane. The enzyme catalyses ATP + H2O + lipid A-core oligosaccharideSide 1 = ADP + phosphate + lipid A-core oligosaccharideSide 2.. Functionally, involved in lipopolysaccharide (LPS) biosynthesis. Translocates lipid A-core from the inner to the outer leaflet of the inner membrane. Transmembrane domains (TMD) form a pore in the inner membrane and the ATP-binding domain (NBD) is responsible for energy generation. The polypeptide is ATP-dependent lipid A-core flippase (Pseudomonas fluorescens (strain Pf0-1)).